The following is a 784-amino-acid chain: PWWP domain-containing protein 2A (784 aa).

Low complexity predominate over residues 1 to 10 (MAAVAAAPGP). Disordered stretches follow at residues 1–29 (MAAV…EWRL), 399–443 (DHKV…KTQL), 468–570 (EKAQ…EIQD), and 609–655 (SSAS…SKEE). Positions 399–412 (DHKVNGKGQHESQK) are enriched in basic and acidic residues. Residues 433 to 442 (PSQTSAAKTQ) show a composition bias toward polar residues. The PWWP domain occupies 684–744 (VGDIVWAKIY…LSQLAPFLEN (61 aa)).

The protein localises to the nucleus. Functionally, H2A.Z-specific chromatin binding protein which plays an important role in the neural crest cell differentiation and/or migration during early development and is essential for the development of the head and eye. Acts as an adapter between distinct nucleosome components (H3K36me3 or H2A.Z) and chromatin-modifying complexes, contributing to the regulation of the levels of histone acetylation at actively transcribed genes. The sequence is that of PWWP domain-containing protein 2A (pwwp2a) from Xenopus laevis (African clawed frog).